The primary structure comprises 640 residues: LRR receptor kinase SERL2 (640 aa).

The signal sequence occupies residues 1–22 (MEPPFFLLLLLLVVSSSSPSAA). Topologically, residues 23-241 (LLSAKGVNNE…AARDRGHKFA (219 aa)) are extracellular. 2 N-linked (GlcNAc...) asparagine glycosylation sites follow: N94 and N107. LRR repeat units lie at residues 95-119 (LTNL…IGRL), 120-143 (ENLK…VGHL), 145-167 (SLQY…SANL), and 168-191 (SHLV…LART). N153, N166, N179, and N222 each carry an N-linked (GlcNAc...) asparagine glycan. The chain crosses the membrane as a helical span at residues 242 to 262 (VAFGSTAGCMGLLLLAAGFLF). Residues 263-640 (WWRHRRNRQI…VQAVELSGPR (378 aa)) are Cytoplasmic-facing. Residues 304–583 (FSGKNILGKG…EGDGLADRWE (280 aa)) enclose the Protein kinase domain. ATP-binding positions include 310–318 (LGKGGFGNV) and K332. Catalysis depends on D427, which acts as the Proton acceptor.

This sequence belongs to the protein kinase superfamily. Ser/Thr protein kinase family. Interacts with MSBP1.

The protein resides in the cell membrane. It carries out the reaction L-seryl-[protein] + ATP = O-phospho-L-seryl-[protein] + ADP + H(+). It catalyses the reaction L-threonyl-[protein] + ATP = O-phospho-L-threonyl-[protein] + ADP + H(+). In terms of biological role, LRR receptor kinase that may be involved in defense response. The sequence is that of LRR receptor kinase SERL2 from Oryza sativa subsp. japonica (Rice).